Reading from the N-terminus, the 229-residue chain is Phosphoglycolate phosphatase (229 aa).

Asp18 functions as the Nucleophile in the catalytic mechanism. 3 residues coordinate Mg(2+): Asp18, Asp20, and Asp176.

Belongs to the HAD-like hydrolase superfamily. CbbY/CbbZ/Gph/YieH family. Mg(2+) is required as a cofactor.

It carries out the reaction 2-phosphoglycolate + H2O = glycolate + phosphate. Its pathway is organic acid metabolism; glycolate biosynthesis; glycolate from 2-phosphoglycolate: step 1/1. Its function is as follows. Specifically catalyzes the dephosphorylation of 2-phosphoglycolate. Is involved in the dissimilation of the intracellular 2-phosphoglycolate formed during the DNA repair of 3'-phosphoglycolate ends, a major class of DNA lesions induced by oxidative stress. The polypeptide is Phosphoglycolate phosphatase (Xylella fastidiosa (strain Temecula1 / ATCC 700964)).